The sequence spans 105 residues: Type VII secretion system extracellular protein D (105 aa).

Forms heterodimers with EsxB.

It is found in the secreted. The sequence is that of Type VII secretion system extracellular protein D from Staphylococcus aureus (strain USA300).